A 392-amino-acid chain; its full sequence is 8-amino-7-oxononanoate synthase (392 aa).

Arginine 18 is a binding site for substrate. 105-106 provides a ligand contact to pyridoxal 5'-phosphate; it reads GY. A substrate-binding site is contributed by histidine 130. 3 residues coordinate pyridoxal 5'-phosphate: serine 177, histidine 205, and threonine 234. Lysine 237 is modified (N6-(pyridoxal phosphate)lysine). Threonine 351 is a binding site for substrate.

It belongs to the class-II pyridoxal-phosphate-dependent aminotransferase family. BioF subfamily. Homodimer. It depends on pyridoxal 5'-phosphate as a cofactor.

It carries out the reaction 6-carboxyhexanoyl-[ACP] + L-alanine + H(+) = (8S)-8-amino-7-oxononanoate + holo-[ACP] + CO2. Its pathway is cofactor biosynthesis; biotin biosynthesis. Its function is as follows. Catalyzes the decarboxylative condensation of pimeloyl-[acyl-carrier protein] and L-alanine to produce 8-amino-7-oxononanoate (AON), [acyl-carrier protein], and carbon dioxide. The polypeptide is 8-amino-7-oxononanoate synthase (Thioalkalivibrio sulfidiphilus (strain HL-EbGR7)).